Consider the following 278-residue polypeptide: Indole-3-glycerol phosphate synthase (278 aa).

The protein belongs to the TrpC family.

The enzyme catalyses 1-(2-carboxyphenylamino)-1-deoxy-D-ribulose 5-phosphate + H(+) = (1S,2R)-1-C-(indol-3-yl)glycerol 3-phosphate + CO2 + H2O. It functions in the pathway amino-acid biosynthesis; L-tryptophan biosynthesis; L-tryptophan from chorismate: step 4/5. This is Indole-3-glycerol phosphate synthase from Pseudomonas paraeruginosa (strain DSM 24068 / PA7) (Pseudomonas aeruginosa (strain PA7)).